The primary structure comprises 215 residues: Mediator of RNA polymerase II transcription subunit 20 (215 aa).

Belongs to the Mediator complex subunit 20 family. Component of the Mediator complex.

The protein resides in the nucleus. Component of the Mediator complex, a coactivator involved in the regulated transcription of nearly all RNA polymerase II-dependent genes. Mediator functions as a bridge to convey information from gene-specific regulatory proteins to the basal RNA polymerase II transcription machinery. Mediator is recruited to promoters by direct interactions with regulatory proteins and serves as a scaffold for the assembly of a functional preinitiation complex with RNA polymerase II and the general transcription factors. This chain is Mediator of RNA polymerase II transcription subunit 20 (SRB2), found in Candida glabrata (strain ATCC 2001 / BCRC 20586 / JCM 3761 / NBRC 0622 / NRRL Y-65 / CBS 138) (Yeast).